The following is a 201-amino-acid chain: FMN-dependent NADH:quinone oxidoreductase (201 aa).

FMN-binding positions include serine 10, 16–18 (SQS), 96–99 (MYNF), and 140–143 (SRGG).

It belongs to the azoreductase type 1 family. Homodimer. Requires FMN as cofactor.

The catalysed reaction is 2 a quinone + NADH + H(+) = 2 a 1,4-benzosemiquinone + NAD(+). It carries out the reaction N,N-dimethyl-1,4-phenylenediamine + anthranilate + 2 NAD(+) = 2-(4-dimethylaminophenyl)diazenylbenzoate + 2 NADH + 2 H(+). Its function is as follows. Quinone reductase that provides resistance to thiol-specific stress caused by electrophilic quinones. In terms of biological role, also exhibits azoreductase activity. Catalyzes the reductive cleavage of the azo bond in aromatic azo compounds to the corresponding amines. The sequence is that of FMN-dependent NADH:quinone oxidoreductase from Citrobacter koseri (strain ATCC BAA-895 / CDC 4225-83 / SGSC4696).